Reading from the N-terminus, the 480-residue chain is Coronin-2B (480 aa).

7 WD repeats span residues His-29 to Glu-77, Pro-78 to Thr-127, Glu-128 to Gly-170, Glu-171 to Gly-212, Arg-213 to Ser-259, Met-260 to Pro-305, and Tyr-306 to Thr-345. Positions Asn-436–Asn-479 form a coiled coil.

Belongs to the WD repeat coronin family. As to quaternary structure, binds to F-actin and to vinculin. Expressed predominantly in brain.

Its subcellular location is the cytoplasm. The protein localises to the cytoskeleton. Functionally, may play a role in the reorganization of neuronal actin structure. This chain is Coronin-2B (CORO2B), found in Homo sapiens (Human).